Consider the following 371-residue polypeptide: tRNA-specific 2-thiouridylase MnmA (371 aa).

Residues 12 to 19 (GMSGGVDS) and M38 contribute to the ATP site. The interaction with target base in tRNA stretch occupies residues 98-100 (NPD). Catalysis depends on C103, which acts as the Nucleophile. An intrachain disulfide couples C103 to C200. Residue G128 participates in ATP binding. The tract at residues 150–152 (KDQ) is interaction with tRNA. C200 (cysteine persulfide intermediate) is an active-site residue. An interaction with tRNA region spans residues 312–313 (RY).

Belongs to the MnmA/TRMU family. As to quaternary structure, interacts with TusE.

The protein resides in the cytoplasm. It carries out the reaction S-sulfanyl-L-cysteinyl-[protein] + uridine(34) in tRNA + AH2 + ATP = 2-thiouridine(34) in tRNA + L-cysteinyl-[protein] + A + AMP + diphosphate + H(+). Its function is as follows. Catalyzes the 2-thiolation of uridine at the wobble position (U34) of tRNA(Lys), tRNA(Glu) and tRNA(Gln), leading to the formation of s(2)U34, the first step of tRNA-mnm(5)s(2)U34 synthesis. Sulfur is provided by IscS, via a sulfur-relay system. Binds ATP and its substrate tRNAs. In Yersinia pseudotuberculosis serotype O:1b (strain IP 31758), this protein is tRNA-specific 2-thiouridylase MnmA.